The chain runs to 186 residues: Homeobox expressed in ES cells 1 (186 aa).

The homeobox DNA-binding region spans 109–168 (GRRPRTAFTRSQIEILENVFRVNSYPGIDIREELAGKLALDEDRIQIWFQNRRAKLKRSH).

Belongs to the ANF homeobox family. In terms of assembly, interacts (via N-terminus) with zyx.

The protein localises to the nucleus. In terms of biological role, regulates the earliest stages of development of the anterior neural plate. Plays a role in forebrain development by inhibiting the expression of otx2 and pax6 in the rostral region of the anterior neural plate. Necessary for both neural differentiation and neural patterning. Controls Spemann organizer development. May act as a transcriptional repressor. The protein is Homeobox expressed in ES cells 1 of Xenopus tropicalis (Western clawed frog).